The chain runs to 352 residues: Ferrochelatase (352 aa).

Fe cation contacts are provided by histidine 222 and glutamate 303.

It belongs to the ferrochelatase family.

Its subcellular location is the cytoplasm. It carries out the reaction heme b + 2 H(+) = protoporphyrin IX + Fe(2+). Its pathway is porphyrin-containing compound metabolism; protoheme biosynthesis; protoheme from protoporphyrin-IX: step 1/1. Functionally, catalyzes the ferrous insertion into protoporphyrin IX. The protein is Ferrochelatase of Brucella abortus (strain S19).